A 246-amino-acid polypeptide reads, in one-letter code: tRNA1(Val) (adenine(37)-N6)-methyltransferase (246 aa).

The protein belongs to the methyltransferase superfamily. tRNA (adenine-N(6)-)-methyltransferase family.

It is found in the cytoplasm. It carries out the reaction adenosine(37) in tRNA1(Val) + S-adenosyl-L-methionine = N(6)-methyladenosine(37) in tRNA1(Val) + S-adenosyl-L-homocysteine + H(+). Its function is as follows. Specifically methylates the adenine in position 37 of tRNA(1)(Val) (anticodon cmo5UAC). This Shewanella halifaxensis (strain HAW-EB4) protein is tRNA1(Val) (adenine(37)-N6)-methyltransferase.